The sequence spans 841 residues: Protein translocase subunit SecA (841 aa).

Residues Gln-85, 103–107 (GEGKT), and Asp-492 each bind ATP. A disordered region spans residues 786 to 812 (REEVVQGQTTAHQPQDGDEAKQAKKAP). Zn(2+)-binding residues include Cys-825, Cys-827, Cys-836, and Cys-837.

It belongs to the SecA family. Monomer and homodimer. Part of the essential Sec protein translocation apparatus which comprises SecA, SecYEG and auxiliary proteins SecDF. Other proteins may also be involved. Requires Zn(2+) as cofactor.

The protein resides in the cell membrane. The protein localises to the cytoplasm. It carries out the reaction ATP + H2O + cellular proteinSide 1 = ADP + phosphate + cellular proteinSide 2.. Part of the Sec protein translocase complex. Interacts with the SecYEG preprotein conducting channel. Has a central role in coupling the hydrolysis of ATP to the transfer of proteins into and across the cell membrane, serving as an ATP-driven molecular motor driving the stepwise translocation of polypeptide chains across the membrane. The protein is Protein translocase subunit SecA of Bacillus velezensis (strain DSM 23117 / BGSC 10A6 / LMG 26770 / FZB42) (Bacillus amyloliquefaciens subsp. plantarum).